The sequence spans 185 residues: Ribosome-recycling factor (185 aa).

Basic and acidic residues predominate over residues 131 to 155 (DRKNANDKIKKSEKDKEITADESKS). The segment at 131–156 (DRKNANDKIKKSEKDKEITADESKSA) is disordered.

This sequence belongs to the RRF family.

It localises to the cytoplasm. Its function is as follows. Responsible for the release of ribosomes from messenger RNA at the termination of protein biosynthesis. May increase the efficiency of translation by recycling ribosomes from one round of translation to another. The sequence is that of Ribosome-recycling factor from Sulfurimonas denitrificans (strain ATCC 33889 / DSM 1251) (Thiomicrospira denitrificans (strain ATCC 33889 / DSM 1251)).